The chain runs to 236 residues: Large ribosomal subunit protein uL3 (236 aa).

It belongs to the universal ribosomal protein uL3 family. In terms of assembly, part of the 50S ribosomal subunit. Forms a cluster with proteins L14 and L19.

One of the primary rRNA binding proteins, it binds directly near the 3'-end of the 23S rRNA, where it nucleates assembly of the 50S subunit. This Anaeromyxobacter dehalogenans (strain 2CP-C) protein is Large ribosomal subunit protein uL3.